Here is a 152-residue protein sequence, read N- to C-terminus: Large ribosomal subunit protein bL9 (152 aa).

The disordered stretch occupies residues 41–61 (QSAMSQLNAERKAEQRREAEE). Over residues 49-61 (AERKAEQRREAEE) the composition is skewed to basic and acidic residues.

This sequence belongs to the bacterial ribosomal protein bL9 family.

Binds to the 23S rRNA. This Levilactobacillus brevis (strain ATCC 367 / BCRC 12310 / CIP 105137 / JCM 1170 / LMG 11437 / NCIMB 947 / NCTC 947) (Lactobacillus brevis) protein is Large ribosomal subunit protein bL9.